The chain runs to 776 residues: Protein SEY1 (776 aa).

Over 1–681 the chain is Cytoplasmic; it reads MADRSAIQLI…KRSIITTRTH (681 aa). The region spanning 34 to 263 is the GB1/RHD3-type G domain; that stretch reads GLDYHVISVF…TENYYFKPQY (230 aa). 44 to 51 lines the GTP pocket; the sequence is GSQSSGKS. The helical transmembrane segment at 682–702 threads the bilayer; it reads IPPWIYVLLAVLGWNEFVAVI. At 703–705 the chain is on the lumenal side; the sequence is RNP. A helical membrane pass occupies residues 706–726; the sequence is LFVTLTLILGATFFVIHKFGL. Residues 727 to 776 lie on the Cytoplasmic side of the membrane; it reads WGPVVNVVQSAVGETRTAIKDKLRQFVVEDHEVKESFEMKDFSKNEQKEK.

The protein belongs to the TRAFAC class dynamin-like GTPase superfamily. GB1/RHD3 GTPase family. RHD3 subfamily. Interacts with RTN1 and YOP1; GTP binding is not required for these interactions.

The protein localises to the endoplasmic reticulum membrane. Cooperates with the reticulon proteins RTN1 and RTN2 and the tubule-shaping DP1 family protein YOP1 to generate and maintain the structure of the tubular endoplasmic reticulum network. Has GTPase activity, which is required for its function in ER organization. The protein is Protein SEY1 of Saccharomyces cerevisiae (strain YJM789) (Baker's yeast).